Here is a 115-residue protein sequence, read N- to C-terminus: Colicin-Ib immunity protein (115 aa).

3 consecutive transmembrane segments (helical) span residues 7 to 27 (VKYL…FYLG), 38 to 58 (FYAF…MRII), and 87 to 107 (IFEL…LIFI).

It localises to the cell membrane. Its function is as follows. This protein is able to protect a cell, which harbors the plasmid IncI1 ColIb-P9 encoding colicin Ib, against colicin Ib. This chain is Colicin-Ib immunity protein, found in Escherichia coli.